Here is a 1175-residue protein sequence, read N- to C-terminus: Solute carrier family 9 member C1 (1175 aa).

The Extracellular portion of the chain corresponds to 1–39; sequence MEMEEISENLTASHSIKLTNMWLELLKSVFLSTPQDLPE. A helical membrane pass occupies residues 40–59; that stretch reads IILILSLICTVGAFLNMHLK. Topologically, residues 60 to 64 are cytoplasmic; that stretch reads DFPIP. A helical membrane pass occupies residues 65–82; that stretch reads LPVILFLIGCCFEILSFA. The Extracellular portion of the chain corresponds to 83–98; that stretch reads STQIQIYADAIQWMDP. Residues 99 to 115 traverse the membrane as a helical segment; it reads DIFFGIFTPVIIFNVAF. The Cytoplasmic segment spans residues 116 to 125; the sequence is DMDIYMLQKL. The chain crosses the membrane as a helical span at residues 126–151; the sequence is FWQILVITIPGFLINYTLILWYLQSV. The transport core domain stretch occupies residues 126–213; sequence FWQILVITIP…SLVIYSGVVH (88 aa). Over 152-157 the chain is Extracellular; it reads NKLSLK. A helical transmembrane segment spans residues 158–183; that stretch reads TVPWLLFSAVLISSDPMLTSASIRDL. The Cytoplasmic segment spans residues 184-186; the sequence is GLS. Residues 187 to 212 traverse the membrane as a helical segment; the sequence is RSLTNLINGESLLTSVLSLVIYSGVV. Topologically, residues 213–225 are extracellular; it reads HIRFKSKSVNHTL. Residues 226–257 form a helical membrane-spanning segment; it reads AHKVMSTAWSYIVESFITGIVFTKVIQLWMAT. Residues 258-261 lie on the Cytoplasmic side of the membrane; that stretch reads IFGD. The chain crosses the membrane as a helical span at residues 262 to 283; sequence DVNHITLIFSVLYLIFYVCELV. At 284-286 the chain is on the extracellular side; the sequence is GMS. A helical membrane pass occupies residues 287–300; it reads GIFTLATIGLFLNS. The Cytoplasmic portion of the chain corresponds to 301–307; sequence TSFKPGV. A helical membrane pass occupies residues 308 to 339; that stretch reads EAFLLEFWNCLSFIGFLMVFTFIGLLIPAHTY. The Extracellular portion of the chain corresponds to 340–344; it reads LHISF. A helical membrane pass occupies residues 345–374; that stretch reads SDVYYSLNIYFTLIVLRLLVFLLMSPILSR. Residues 345–446 form a transport core domain region; sequence SDVYYSLNIY…FILPMAVTKL (102 aa). Topologically, residues 375-380 are cytoplasmic; the sequence is LGHGFS. The helical transmembrane segment at 381-411 threads the bilayer; the sequence is WRWAFIMVWSEMKGTPNINMALLLAYSDISL. Over 412–415 the chain is Extracellular; that stretch reads GSER. A helical transmembrane segment spans residues 416-446; the sequence is ERSQILFHGVSVCVITLIVNRFILPMAVTKL. The Cytoplasmic segment spans residues 447–632; sequence GLRDVTSTKY…ACHRIVFTNE (186 aa). Residues 618 to 698 form an ion transport-like region; sequence YMFLHACHRI…EFFSHTWLLF (81 aa). A helical transmembrane segment spans residues 633 to 653; it reads FEYTGYLVVLMSTYPMIICWI. Topologically, residues 654–657 are extracellular; the sequence is SRLK. A helical membrane pass occupies residues 658–684; sequence DIYDNEIKCANYYFLAFYILEALLKVA. Residues 685–691 lie on the Cytoplasmic side of the membrane; it reads AMRKEFF. The helical transmembrane segment at 692 to 716 threads the bilayer; the sequence is SHTWLLFELGITLVGVLDIILIETD. Over 717-724 the chain is Extracellular; the sequence is SISYNFDL. A helical membrane pass occupies residues 725-751; the sequence is TETVVFMNVIRLLRILRILKLVTPKLL. Residues 752 to 1175 are Cytoplasmic-facing; the sequence is QIIDKRMSQQ…EELIEENINI (424 aa). Basic and acidic residues predominate over residues 1137–1146; the sequence is MKPDSERESF. The tract at residues 1137-1175 is disordered; that stretch reads MKPDSERESFETLDETSEEDNGKKENQENEELIEENINI. The span at 1164-1175 shows a compositional bias: acidic residues; the sequence is ENEELIEENINI.

This sequence belongs to the monovalent cation:proton antiporter 1 (CPA1) transporter (TC 2.A.36) family. In terms of assembly, interacts with soluble adenylyl cyclase (sAC). In terms of tissue distribution, testis-specific. Specifically present in the principal piece of sperm tail (at protein level).

The protein localises to the cell projection. The protein resides in the cilium. It is found in the flagellum membrane. Functionally, sperm-specific solute carrier involved in intracellular pH regulation of spermatozoa. Required for sperm motility and fertility. Involved in sperm cell hyperactivation, a step needed for sperm motility which is essential late in the preparation of sperm for fertilization. Required for the expression and bicarbonate regulation of the soluble adenylyl cyclase (sAC). The chain is Solute carrier family 9 member C1 (Slc9c1) from Mus musculus (Mouse).